Here is a 407-residue protein sequence, read N- to C-terminus: F-box protein SKIP23 (407 aa).

In terms of domain architecture, F-box spans 2–50 (VDWSTLPKDLLDLISKSLESSFDLIQFRSVCSSWRSAAEPKSPLPTHHL).

Part of a SCF (ASK-cullin-F-box) protein ligase complex. Interacts with SKP1A/ASK1.

It localises to the nucleus. It participates in protein modification; protein ubiquitination. Component of SCF(ASK-cullin-F-box) E3 ubiquitin ligase complexes, which may mediate the ubiquitination and subsequent proteasomal degradation of target proteins. The protein is F-box protein SKIP23 (SKIP23) of Arabidopsis thaliana (Mouse-ear cress).